We begin with the raw amino-acid sequence, 41 residues long: Photosystem I reaction center subunit IX (41 aa).

A helical transmembrane segment spans residues 7 to 27 (YLSTAPVLATVWMIITAGILI).

The protein belongs to the PsaJ family.

The protein resides in the cellular thylakoid membrane. May help in the organization of the PsaE and PsaF subunits. This is Photosystem I reaction center subunit IX from Trichodesmium erythraeum (strain IMS101).